The following is an 860-amino-acid chain: GPI ethanolamine phosphate transferase 2 (860 aa).

Residues Asn-123 and Asn-180 are each glycosylated (N-linked (GlcNAc...) asparagine). A run of 8 helical transmembrane segments spans residues Leu-408 to Leu-428, Leu-438 to Glu-458, Glu-459 to Ser-479, Phe-487 to Gly-506, Asn-524 to Trp-544, Leu-555 to Ala-575, Trp-576 to Leu-596, and Ala-639 to Val-659. Asn-672 is a glycosylation site (N-linked (GlcNAc...) asparagine). The next 4 membrane-spanning stretches (helical) occupy residues Leu-692–Gly-712, Phe-736–Gly-756, Val-795–Phe-815, and Phe-834–Val-854.

Belongs to the PIGG/PIGN/PIGO family. PIGG subfamily.

It localises to the endoplasmic reticulum membrane. Its pathway is glycolipid biosynthesis; glycosylphosphatidylinositol-anchor biosynthesis. Functionally, ethanolamine phosphate transferase involved in glycosylphosphatidylinositol-anchor biosynthesis. Transfers ethanolamine phosphate to the GPI second mannose. This chain is GPI ethanolamine phosphate transferase 2 (LAS21), found in Yarrowia lipolytica (strain CLIB 122 / E 150) (Yeast).